The sequence spans 588 residues: Snake venom 5'-nucleotidase (588 aa).

The signal sequence occupies residues 1-40 (MQTPKRRRGAQGCPRSSPSPPLLLLVRAVWFCAALSVAAG). Zn(2+)-binding residues include Asp51 and His53. A disulfide bridge links Cys66 with Cys71. Zn(2+)-binding residues include Asp99 and Asn131. A glycan (N-linked (GlcNAc...) asparagine) is linked at Asn167. Zn(2+)-binding residues include His234 and His257. Residues Asn347 and Asn361 are each glycosylated (N-linked (GlcNAc...) asparagine). Intrachain disulfides connect Cys367–Cys372 and Cys379–Cys401. Arg368 is an AMP binding site. AMP is bound by residues Asn404 and Arg409. Asn418 carries N-linked (GlcNAc...) asparagine glycosylation. Phe432 contributes to the AMP binding site. Cys491 and Cys494 are disulfide-bonded. Phe515 and Asp521 together coordinate AMP. Asn532 carries N-linked (GlcNAc...) asparagine glycosylation. The GPI-anchor amidated serine moiety is linked to residue Ser564. The propeptide at 565–588 (AGTLFQAQLFLTWGLCVSLLYFIL) is removed in mature form.

Belongs to the 5'-nucleotidase family. Requires Zn(2+) as cofactor. In terms of processing, venom 5'-nucleotidases (or a part thereof) may be released into the venom via exosome-like vesicles. They may be attached via a GPI anchor to the membrane of these vesicles. Soluble forms of 5'-nucleotidase might be released by cleavage of the ectodomain in the exosome-like vesicles or venom gland cells. As to expression, expressed by the venom gland.

Its subcellular location is the membrane. It carries out the reaction a ribonucleoside 5'-phosphate + H2O = a ribonucleoside + phosphate. Hydrolyzes nucleotides into nucleosides. Snake venom 5'-nucleotidases are widely distributed among venomous snake taxa, but there is a lack of information about their biological activities. They have been shown to inhibit platelet aggregation. This effect may be due to the liberation of inhibitory AMP or adenosine by its action on ADP released upon initiation of aggregation. Venom 5'-nucleotidases are also known to synergistically act in vivo with other toxins like ADPases, phospholipases, and disintegrins to exert a more pronounced anti-coagulant effect. The sequence is that of Snake venom 5'-nucleotidase from Crotalus adamanteus (Eastern diamondback rattlesnake).